Reading from the N-terminus, the 212-residue chain is Prolactin (212 aa).

A signal peptide spans 1-24 (MAHRETNGSKLFITVLCMVAACSA). 2 cysteine pairs are disulfide-bonded: cysteine 70-cysteine 185 and cysteine 202-cysteine 212.

It belongs to the somatotropin/prolactin family.

Its subcellular location is the secreted. The polypeptide is Prolactin (prl) (Sparus aurata (Gilthead sea bream)).